The following is a 532-amino-acid chain: Probable rhamnogalacturonase B (532 aa).

Residues 1–21 (MRINTLSLFSLVSLVPTLALA) form the signal peptide. Cysteines 42 and 68 form a disulfide. The active-site Proton donor is D219. C221 and C238 are disulfide-bonded. Residue N239 is glycosylated (N-linked (GlcNAc...) asparagine). H294 is an active-site residue. N321 carries N-linked (GlcNAc...) asparagine glycosylation. Disulfide bonds link C344–C350 and C374–C383. Composition is skewed to low complexity over residues 466–475 (TVAAATSTPA) and 490–499 (QPSQQSPGQS). The tract at residues 466–532 (TVAAATSTPA…HRHHQRHGHH (67 aa)) is disordered. Over residues 521 to 532 (AGHRHHQRHGHH) the composition is skewed to basic residues.

It belongs to the glycosyl hydrolase 28 family.

The protein localises to the secreted. It catalyses the reaction Endohydrolysis of alpha-D-GalA-(1-&gt;2)-alpha-L-Rha glycosidic bond in the rhamnogalacturonan I backbone with initial inversion of anomeric configuration releasing oligosaccharides with beta-D-GalA at the reducing end.. Functionally, pectinolytic enzymes consist of four classes of enzymes: pectine lyase, polygalacturonase, pectin methylesterase and rhamnogalacturonase. Hydrolyzes alpha-D-galacturonopyranosyl-(1,2)-alpha-L-rhamnopyranosyl linkages in the backbone of the hairy regions of pectins. The sequence is that of Probable rhamnogalacturonase B (rhgB) from Aspergillus oryzae (strain ATCC 42149 / RIB 40) (Yellow koji mold).